The sequence spans 304 residues: Signal recognition particle receptor FtsY (304 aa).

GTP contacts are provided by residues 109-116, 191-195, and 255-258; these read GVNGVGKT, DTAGR, and TKLD.

This sequence belongs to the GTP-binding SRP family. FtsY subfamily. In terms of assembly, part of the signal recognition particle protein translocation system, which is composed of SRP and FtsY. In terms of processing, sensitive to endogenous proteolytic cleavage between residues 18 and 19 and between residues 86 and 87.

It localises to the cell membrane. The protein localises to the cytoplasm. The enzyme catalyses GTP + H2O = GDP + phosphate + H(+). Involved in targeting and insertion of nascent membrane proteins into the cytoplasmic membrane. Acts as a receptor for the complex formed by the signal recognition particle (SRP) and the ribosome-nascent chain (RNC). The chain is Signal recognition particle receptor FtsY from Thermus aquaticus.